A 209-amino-acid polypeptide reads, in one-letter code: Thymidylate kinase (209 aa).

10-17 (GPEGAGKT) lines the ATP pocket.

It belongs to the thymidylate kinase family.

The catalysed reaction is dTMP + ATP = dTDP + ADP. In terms of biological role, phosphorylation of dTMP to form dTDP in both de novo and salvage pathways of dTTP synthesis. The sequence is that of Thymidylate kinase from Anoxybacillus flavithermus (strain DSM 21510 / WK1).